Consider the following 60-residue polypeptide: Large ribosomal subunit protein bL32 (60 aa).

Belongs to the bacterial ribosomal protein bL32 family.

The polypeptide is Large ribosomal subunit protein bL32 (Borrelia hermsii (strain HS1 / DAH)).